We begin with the raw amino-acid sequence, 272 residues long: Nitrogenase iron protein (272 aa).

8 to 15 (GKGGIGKS) is an ATP binding site. C94 contributes to the [4Fe-4S] cluster binding site. R97 carries the ADP-ribosylarginine; by dinitrogenase reductase ADP-ribosyltransferase modification. C129 contacts [4Fe-4S] cluster.

The protein belongs to the NifH/BchL/ChlL family. As to quaternary structure, homodimer. Requires [4Fe-4S] cluster as cofactor. Post-translationally, the reversible ADP-ribosylation of Arg-97 inactivates the nitrogenase reductase and regulates nitrogenase activity.

The enzyme catalyses N2 + 8 reduced [2Fe-2S]-[ferredoxin] + 16 ATP + 16 H2O = H2 + 8 oxidized [2Fe-2S]-[ferredoxin] + 2 NH4(+) + 16 ADP + 16 phosphate + 6 H(+). Functionally, the key enzymatic reactions in nitrogen fixation are catalyzed by the nitrogenase complex, which has 2 components: the iron protein and the molybdenum-iron protein. The chain is Nitrogenase iron protein from Desulforamulus reducens (strain ATCC BAA-1160 / DSM 100696 / MI-1) (Desulfotomaculum reducens).